The primary structure comprises 192 residues: Phosphoheptose isomerase (192 aa).

In terms of domain architecture, SIS spans 37–192 (LADSFKAGGK…IQLIEKEMAK (156 aa)). Position 52 to 54 (52 to 54 (NGG)) interacts with substrate. The Zn(2+) site is built by H61 and E65. Substrate is bound by residues E65, 93 to 94 (ND), 119 to 121 (STS), S124, and Q172. The Zn(2+) site is built by Q172 and H180.

This sequence belongs to the SIS family. GmhA subfamily. In terms of assembly, homotetramer. The cofactor is Zn(2+).

It is found in the cytoplasm. It carries out the reaction 2 D-sedoheptulose 7-phosphate = D-glycero-alpha-D-manno-heptose 7-phosphate + D-glycero-beta-D-manno-heptose 7-phosphate. Its pathway is carbohydrate biosynthesis; D-glycero-D-manno-heptose 7-phosphate biosynthesis; D-glycero-alpha-D-manno-heptose 7-phosphate and D-glycero-beta-D-manno-heptose 7-phosphate from sedoheptulose 7-phosphate: step 1/1. In terms of biological role, catalyzes the isomerization of sedoheptulose 7-phosphate in D-glycero-D-manno-heptose 7-phosphate. The chain is Phosphoheptose isomerase from Escherichia fergusonii (strain ATCC 35469 / DSM 13698 / CCUG 18766 / IAM 14443 / JCM 21226 / LMG 7866 / NBRC 102419 / NCTC 12128 / CDC 0568-73).